Here is a 501-residue protein sequence, read N- to C-terminus: Solute carrier family 2, facilitated glucose transporter member 5 (501 aa).

The residue at position 1 (M1) is an N-acetylmethionine. At 1–18 the chain is on the cytoplasmic side; it reads MEQQDQSMKEGRLTLVLA. Residues 19-39 traverse the membrane as a helical segment; that stretch reads LATLIAAFGSSFQYGYNVAAV. Residue Y32 participates in D-fructose binding. Residues 40–68 are Extracellular-facing; that stretch reads NSPALLMQQFYNETYYGRTGEFMEDFPLT. N51 carries an N-linked (GlcNAc...) asparagine glycan. The chain crosses the membrane as a helical span at residues 69–91; that stretch reads LLWSVTVSMFPFGGFIGSLLVGP. The Cytoplasmic segment spans residues 92 to 98; the sequence is LVNKFGR. The helical transmembrane segment at 99-119 threads the bilayer; the sequence is KGALLFNNIFSIVPAILMGCS. Over 120-126 the chain is Extracellular; that stretch reads RVAKSFE. A helical membrane pass occupies residues 127–149; the sequence is LIIISRLLVGICAGVSSNVVPMY. Over 150 to 161 the chain is Cytoplasmic; the sequence is LGELAPKNLRGA. The helical transmembrane segment at 162–182 threads the bilayer; the sequence is LGVVPQLFITVGILVAQIFGL. Position 167 (Q167) interacts with D-fructose. Residues 183–192 are Extracellular-facing; the sequence is RNLLANVDGW. A helical membrane pass occupies residues 193-213; it reads PILLGLTGVPAALQLVLLPFF. The Cytoplasmic portion of the chain corresponds to 214–277; the sequence is PESPRYLLIQ…LFRMRSLRWQ (64 aa). Residues 278 to 298 form a helical membrane-spanning segment; sequence LLSIIVLMGGQQLSGVNAIYY. D-fructose-binding positions include Q288 and 296-298; that span reads IYY. At 299–313 the chain is on the extracellular side; it reads YADQIYLSAGVPKEH. A helical membrane pass occupies residues 314 to 334; it reads VQFVTAGTGAVNVVMTFCAVF. The Cytoplasmic portion of the chain corresponds to 335–342; sequence VVELLGRR. The chain crosses the membrane as a helical span at residues 343–363; sequence LLLLLGFSICLVACCVLTAAL. Residues 364 to 371 lie on the Extracellular side of the membrane; that stretch reads ALQDTVSW. A helical membrane pass occupies residues 372–394; that stretch reads MPYISIVCVISYVIGHALGPSPI. H387 serves as a coordination point for D-fructose. Topologically, residues 395–412 are cytoplasmic; it reads PALLITEIFLQSSRPSAF. A helical membrane pass occupies residues 413–433; it reads MVGGSVHWLSNFTVGLIFPFI. Residue 419–420 coordinates D-fructose; the sequence is HW. Topologically, residues 434 to 439 are extracellular; the sequence is QEGLGP. The helical transmembrane segment at 440–460 threads the bilayer; it reads YSFIVFAVICLLTTIYIFLIV. Residues 461–501 lie on the Cytoplasmic side of the membrane; it reads PETKAKTFIEINQIFTKMNKVSEVYPEKEELKELPPVTLEQ.

Belongs to the major facilitator superfamily. Sugar transporter (TC 2.A.1.1) family. Glucose transporter subfamily.

The protein resides in the apical cell membrane. It is found in the cell membrane. The protein localises to the sarcolemma. The catalysed reaction is D-fructose(out) = D-fructose(in). In terms of biological role, functions as a fructose transporter that has only low activity with other monosaccharides. Can mediate the uptake of deoxyglucose, but with low efficiency. Essential for fructose uptake in the small intestine. Plays a role in the regulation of salt uptake and blood pressure in response to dietary fructose. Required for the development of high blood pressure in response to high dietary fructose intake. This is Solute carrier family 2, facilitated glucose transporter member 5 from Pongo abelii (Sumatran orangutan).